The chain runs to 160 residues: Ribosomal RNA large subunit methyltransferase H (160 aa).

Residues Leu-76 and Gly-108 each coordinate S-adenosyl-L-methionine.

Belongs to the RNA methyltransferase RlmH family. As to quaternary structure, homodimer.

The protein resides in the cytoplasm. The catalysed reaction is pseudouridine(1915) in 23S rRNA + S-adenosyl-L-methionine = N(3)-methylpseudouridine(1915) in 23S rRNA + S-adenosyl-L-homocysteine + H(+). In terms of biological role, specifically methylates the pseudouridine at position 1915 (m3Psi1915) in 23S rRNA. The sequence is that of Ribosomal RNA large subunit methyltransferase H from Bradyrhizobium diazoefficiens (strain JCM 10833 / BCRC 13528 / IAM 13628 / NBRC 14792 / USDA 110).